We begin with the raw amino-acid sequence, 467 residues long: Flagellar hook-associated protein 2 (467 aa).

Residues 411 to 439 (VNATLKSLTKQYLSVSNSIDETVARYKAQ) are a coiled coil.

The protein belongs to the FliD family. As to quaternary structure, homopentamer.

Its subcellular location is the secreted. The protein resides in the bacterial flagellum. Functionally, required for the morphogenesis and for the elongation of the flagellar filament by facilitating polymerization of the flagellin monomers at the tip of growing filament. Forms a capping structure, which prevents flagellin subunits (transported through the central channel of the flagellum) from leaking out without polymerization at the distal end. This chain is Flagellar hook-associated protein 2 (fliD), found in Salmonella typhimurium (strain LT2 / SGSC1412 / ATCC 700720).